The primary structure comprises 204 residues: ATP-dependent Clp protease proteolytic subunit (204 aa).

Residue Ser-101 is the Nucleophile of the active site. Residue His-126 is part of the active site.

This sequence belongs to the peptidase S14 family. In terms of assembly, component of the chloroplastic Clp protease core complex.

It is found in the plastid. Its subcellular location is the chloroplast stroma. The catalysed reaction is Hydrolysis of proteins to small peptides in the presence of ATP and magnesium. alpha-casein is the usual test substrate. In the absence of ATP, only oligopeptides shorter than five residues are hydrolyzed (such as succinyl-Leu-Tyr-|-NHMec, and Leu-Tyr-Leu-|-Tyr-Trp, in which cleavage of the -Tyr-|-Leu- and -Tyr-|-Trp bonds also occurs).. Cleaves peptides in various proteins in a process that requires ATP hydrolysis. Has a chymotrypsin-like activity. Plays a major role in the degradation of misfolded proteins. In Anthoceros angustus (Hornwort), this protein is ATP-dependent Clp protease proteolytic subunit.